The following is a 620-amino-acid chain: Glutathione-regulated potassium-efflux system protein KefC (620 aa).

The next 12 membrane-spanning stretches (helical) occupy residues 4 to 24 (HTLMQALIYLGSAALIVPIAV), 26 to 46 (LGLGSVLGYLIAGCIIGPWGL), 54 to 74 (SILHFAEIGVVLMLFVIGLEL), 90 to 110 (GALQMVICGGLIGFFCMFLGL), 114 to 134 (VAELIGMTLALSSTAIAMQAM), 149 to 169 (FAVLLFQDIAAIPLVAMIPLL), 178 to 198 (LGAFALSALKVAGALALVVLL), 218 to 238 (VFSAVALFLVFGFGLLLEEVG), 270 to 290 (GLLLGLFFIGVGMSIDFGTLV), 294 to 314 (LRILLLLAGFLAIKIVMLWLI), 327 to 347 (WFAVLLGQGSEFAFVVFGAAQ), and 359 to 379 (ALTLAVALSMAATPIFLVLLT). The 120-residue stretch at 399–518 (QPRVIVAGFG…AGVAMPERET (120 aa)) folds into the RCK N-terminal domain. Residues 599–620 (QGTAEGKHTGDIADEPQVKPST) are disordered.

Belongs to the monovalent cation:proton antiporter 2 (CPA2) transporter (TC 2.A.37) family. KefC subfamily. As to quaternary structure, homodimer. Interacts with the regulatory subunit KefF.

The protein localises to the cell inner membrane. In terms of biological role, pore-forming subunit of a potassium efflux system that confers protection against electrophiles. Catalyzes K(+)/H(+) antiport. This chain is Glutathione-regulated potassium-efflux system protein KefC, found in Salmonella arizonae (strain ATCC BAA-731 / CDC346-86 / RSK2980).